Reading from the N-terminus, the 166-residue chain is Small ribosomal subunit protein uS5 (166 aa).

In terms of domain architecture, S5 DRBM spans 11-74 (LVEKLVAVDR…EAARRNMITV (64 aa)).

Belongs to the universal ribosomal protein uS5 family. In terms of assembly, part of the 30S ribosomal subunit. Contacts proteins S4 and S8.

In terms of biological role, with S4 and S12 plays an important role in translational accuracy. Its function is as follows. Located at the back of the 30S subunit body where it stabilizes the conformation of the head with respect to the body. The sequence is that of Small ribosomal subunit protein uS5 from Acinetobacter baumannii (strain ATCC 17978 / DSM 105126 / CIP 53.77 / LMG 1025 / NCDC KC755 / 5377).